A 127-amino-acid chain; its full sequence is Large ribosomal subunit protein bL12 (127 aa).

It belongs to the bacterial ribosomal protein bL12 family. As to quaternary structure, homodimer. Part of the ribosomal stalk of the 50S ribosomal subunit. Forms a multimeric L10(L12)X complex, where L10 forms an elongated spine to which 2 to 4 L12 dimers bind in a sequential fashion. Binds GTP-bound translation factors.

Its function is as follows. Forms part of the ribosomal stalk which helps the ribosome interact with GTP-bound translation factors. Is thus essential for accurate translation. This Carboxydothermus hydrogenoformans (strain ATCC BAA-161 / DSM 6008 / Z-2901) protein is Large ribosomal subunit protein bL12.